The chain runs to 262 residues: Thiazole synthase (262 aa).

Lys104 (schiff-base intermediate with DXP) is an active-site residue. Residues Gly165, 191–192 (AG), and 213–214 (NT) each bind 1-deoxy-D-xylulose 5-phosphate.

It belongs to the ThiG family. As to quaternary structure, homotetramer. Forms heterodimers with either ThiH or ThiS.

The protein resides in the cytoplasm. It carries out the reaction [ThiS sulfur-carrier protein]-C-terminal-Gly-aminoethanethioate + 2-iminoacetate + 1-deoxy-D-xylulose 5-phosphate = [ThiS sulfur-carrier protein]-C-terminal Gly-Gly + 2-[(2R,5Z)-2-carboxy-4-methylthiazol-5(2H)-ylidene]ethyl phosphate + 2 H2O + H(+). It functions in the pathway cofactor biosynthesis; thiamine diphosphate biosynthesis. Its function is as follows. Catalyzes the rearrangement of 1-deoxy-D-xylulose 5-phosphate (DXP) to produce the thiazole phosphate moiety of thiamine. Sulfur is provided by the thiocarboxylate moiety of the carrier protein ThiS. In vitro, sulfur can be provided by H(2)S. The polypeptide is Thiazole synthase (Alkalilimnicola ehrlichii (strain ATCC BAA-1101 / DSM 17681 / MLHE-1)).